A 109-amino-acid polypeptide reads, in one-letter code: N-cym protein (109 aa).

Interacts with MYCN and GSK3B. As to expression, expressed in the neuronal cells of the cerebrum and cerebellum, spermatocytes of the testis, pancreatic cells and also the heart. Expressed in both primary and metastatic neuroblastomas and in thyroid tumors (at protein level). Expression is associated with poor prognosis in neuroblastoma. Expressed in the fetal brain, lung, liver and kidney at varying low levels.

The protein localises to the cytoplasm. The protein resides in the nucleus. Regulates stability of MYCN in neuroblastoma cells by inhibiting GSK3B-mediated MYCN phosphorylation. Inhibits GSK3B activity by promoting its phosphorylation at 'Ser-9'. The chain is N-cym protein (MYCNOS) from Homo sapiens (Human).